Here is a 452-residue protein sequence, read N- to C-terminus: ADP-dependent glucose/glucosamine kinase (452 aa).

Residues 1 to 452 (MSWDEMYRDA…AFVSEFSLSS (452 aa)) form the ADPK domain. D-glucose contacts are provided by residues aspartate 33, glutamate 87, 111 to 112 (GQ), and histidine 174. Residue glutamate 264 coordinates Mg(2+). ADP is bound at residue asparagine 290. Residue glutamate 293 participates in Mg(2+) binding. ADP is bound by residues 339 to 340 (HT), valine 426, and glycine 436. Aspartate 437 lines the D-glucose pocket. Residue aspartate 437 participates in Mg(2+) binding. Aspartate 437 serves as the catalytic Proton acceptor.

Belongs to the ADP-dependent glucokinase family. The cofactor is Mg(2+).

It is found in the cytoplasm. It carries out the reaction D-glucose + ADP = D-glucose 6-phosphate + AMP + H(+). The enzyme catalyses D-glucosamine + ADP = D-glucosamine 6-phosphate + AMP + H(+). The protein operates within carbohydrate degradation; glycolysis. Functionally, catalyzes the ADP-dependent phosphorylation of D-glucose to D-glucose 6-phosphate and glucosamine to glucosamine 6-phosphate. This chain is ADP-dependent glucose/glucosamine kinase, found in Pyrococcus abyssi (strain GE5 / Orsay).